A 449-amino-acid chain; its full sequence is Glutamyl-tRNA reductase (449 aa).

Residues 58-61, Ser-121, 126-128, and Gln-132 contribute to the substrate site; these read TCNR and ETQ. The active-site Nucleophile is the Cys-59. Residue 203-208 coordinates NADP(+); it reads GLGEMA.

The protein belongs to the glutamyl-tRNA reductase family. In terms of assembly, homodimer.

The catalysed reaction is (S)-4-amino-5-oxopentanoate + tRNA(Glu) + NADP(+) = L-glutamyl-tRNA(Glu) + NADPH + H(+). Its pathway is porphyrin-containing compound metabolism; protoporphyrin-IX biosynthesis; 5-aminolevulinate from L-glutamyl-tRNA(Glu): step 1/2. In terms of biological role, catalyzes the NADPH-dependent reduction of glutamyl-tRNA(Glu) to glutamate 1-semialdehyde (GSA). This Helicobacter pylori (strain HPAG1) protein is Glutamyl-tRNA reductase.